Here is a 594-residue protein sequence, read N- to C-terminus: MSDSVSISVPYRNLRKEIELETVTKHRQNESGSSSFSESASPSNHSDSADGESVSKNCSLVTLVLSCTVAAGVQFGWALQLSLLTPYIQTLGISHAFSSFIWLCGPITGLVVQPFVGIWSDKCTSKYGRRRPFILVGSFMISIAVIIIGFSADIGYLLGDSKEHCSTFKGTRTRAAVVFIIGFWLLDLANNTVQGPARALLADLSGPDQRNTANAVFCLWMAIGNILGFSAGASGKWQEWFPFLTSRACCAACGNLKAAFLLAVVFLTICTLVTIYFAKEIPFTSNKPTRIQDSAPLLDDLQSKGLEHSKLNNGTANGIKYERVERDTDEQFGNSENEHQDETYVDGPGSVLVNLLTSLRHLPPAMHSVLIVMALTWLSWFPFFLFDTDWMGREVYHGDPTGDSLHMELYDQGVREGALGLLLNSVVLGISSFLIEPMCQRMGARVVWALSNFTVFACMAGTAVISLMSLSDDKNGIEYIMRGNETTRTAAVIVFALLGFPLAITYSVPFSVTAEVTADSGGGQGLAIGVLNLAIVIPQMIVSLGAGPWDQLFGGGNLPAFVLASVAAFAAGVIALQRLPTLSSSFKSTGFHIG.

Serine 2 is modified (N-acetylserine). Over 2 to 58 (SDSVSISVPYRNLRKEIELETVTKHRQNESGSSSFSESASPSNHSDSADGESVSKNC) the chain is Cytoplasmic. The tract at residues 23–50 (VTKHRQNESGSSSFSESASPSNHSDSAD) is disordered. The span at 31 to 46 (SGSSSFSESASPSNHS) shows a compositional bias: low complexity. Residues 59–79 (SLVTLVLSCTVAAGVQFGWAL) form a helical membrane-spanning segment. The Extracellular portion of the chain corresponds to 80-98 (QLSLLTPYIQTLGISHAFS). A helical membrane pass occupies residues 99–119 (SFIWLCGPITGLVVQPFVGIW). At 120 to 131 (SDKCTSKYGRRR) the chain is on the cytoplasmic side. The helical transmembrane segment at 132-152 (PFILVGSFMISIAVIIIGFSA) threads the bilayer. Over 153–174 (DIGYLLGDSKEHCSTFKGTRTR) the chain is Extracellular. A helical transmembrane segment spans residues 175–195 (AAVVFIIGFWLLDLANNTVQG). Topologically, residues 196–214 (PARALLADLSGPDQRNTAN) are cytoplasmic. Residues 215 to 235 (AVFCLWMAIGNILGFSAGASG) traverse the membrane as a helical segment. Over 236-257 (KWQEWFPFLTSRACCAACGNLK) the chain is Extracellular. The helical transmembrane segment at 258 to 278 (AAFLLAVVFLTICTLVTIYFA) threads the bilayer. Residues 279–365 (KEIPFTSNKP…LTSLRHLPPA (87 aa)) are Cytoplasmic-facing. The chain crosses the membrane as a helical span at residues 366–386 (MHSVLIVMALTWLSWFPFFLF). Over 387 to 417 (DTDWMGREVYHGDPTGDSLHMELYDQGVREG) the chain is Extracellular. The helical transmembrane segment at 418-438 (ALGLLLNSVVLGISSFLIEPM) threads the bilayer. Residues 439 to 445 (CQRMGAR) are Cytoplasmic-facing. Residues 446-466 (VVWALSNFTVFACMAGTAVIS) form a helical membrane-spanning segment. The Extracellular portion of the chain corresponds to 467 to 489 (LMSLSDDKNGIEYIMRGNETTRT). An N-linked (GlcNAc...) asparagine glycan is attached at asparagine 484. Residues 490–510 (AAVIVFALLGFPLAITYSVPF) traverse the membrane as a helical segment. Residues 511-525 (SVTAEVTADSGGGQG) lie on the Cytoplasmic side of the membrane. A helical transmembrane segment spans residues 526 to 546 (LAIGVLNLAIVIPQMIVSLGA). Topologically, residues 547–555 (GPWDQLFGG) are extracellular. A helical transmembrane segment spans residues 556-576 (GNLPAFVLASVAAFAAGVIAL). Over 577–594 (QRLPTLSSSFKSTGFHIG) the chain is Cytoplasmic.

This sequence belongs to the glycoside-pentoside-hexuronide (GPH) cation symporter transporter (TC 2.A.2.4) family. In terms of assembly, homodimer. Interacts with SUC2 and SUC4. Mostly localized in parenchymatic cells next to vascular tissues (at protein level). Present in stipules, trichomes, hydathodes and guard cells of source leaves, as well as in lateral root tips and flowers.

The protein localises to the cell membrane. It carries out the reaction sucrose(out) + H(+)(out) = sucrose(in) + H(+)(in). The protein operates within glycan biosynthesis; sucrose metabolism. Its activity is regulated as follows. Inhibited by protonophores (e.g. dinitrophenol and carbonyl cyanide m-chlorophenyl-hydrazone (CCCP)) and SH group inhibitors (e.g. p-chloromercuribenzene sulphonic acid (PCMBS)). Its function is as follows. Responsible for the transport of sucrose into the cell, with the concomitant uptake of protons (symport system). Can also transport maltose at a lesser rate. May also transport biotin. Probably involved in carpel maturation that leads to pod shatter and seed dispersal. The sequence is that of Sucrose transport protein SUC3 from Arabidopsis thaliana (Mouse-ear cress).